We begin with the raw amino-acid sequence, 263 residues long: Type II restriction enzyme TthHB8I (263 aa).

The enzyme catalyses Endonucleolytic cleavage of DNA to give specific double-stranded fragments with terminal 5'-phosphates.. Functionally, a P subtype restriction enzyme that recognizes the double-stranded sequence 5'-TCGA-3' and cleaves after T-1. In Thermus thermophilus (strain ATCC 27634 / DSM 579 / HB8), this protein is Type II restriction enzyme TthHB8I (tthHB8IR).